Reading from the N-terminus, the 900-residue chain is DNA mismatch repair protein MutS (900 aa).

Position 637–644 (637–644 (GPNMAGKS)) interacts with ATP.

The protein belongs to the DNA mismatch repair MutS family.

This protein is involved in the repair of mismatches in DNA. It is possible that it carries out the mismatch recognition step. This protein has a weak ATPase activity. In Methanosarcina barkeri (strain Fusaro / DSM 804), this protein is DNA mismatch repair protein MutS.